A 220-amino-acid chain; its full sequence is Cytidylate kinase (220 aa).

10-18 is a binding site for ATP; that stretch reads GPASSGKST.

The protein belongs to the cytidylate kinase family. Type 1 subfamily.

Its subcellular location is the cytoplasm. The enzyme catalyses CMP + ATP = CDP + ADP. It carries out the reaction dCMP + ATP = dCDP + ADP. This Lactococcus lactis subsp. cremoris (strain SK11) protein is Cytidylate kinase.